A 131-amino-acid chain; its full sequence is Small ribosomal subunit protein uS19 (131 aa).

It belongs to the universal ribosomal protein uS19 family.

Its function is as follows. Protein S19 forms a complex with S13 that binds strongly to the 16S ribosomal RNA. The chain is Small ribosomal subunit protein uS19 from Cenarchaeum symbiosum (strain A).